A 235-amino-acid chain; its full sequence is MKFEAKLESGILIRRYKRFLTDIKLPDKSERTIHCANSGAMTGCAEPGNTVFFSTSSNLKRKYPNSWELSVTEHNHTICVNTIRANQLVVEAIINKEIDELVNYAELKTEVKYGSENSRIDIFLSAEMLPDCYIEVKSVTLLDESGQGYFPDSVTTRGQKHLRELTEIAQNGQKAVLFFAVLHSGIEKVSIAHHIDQQYYSLLLEAIESGVTVLCYQAEMSPTEMKIVRKLPFSI.

The protein belongs to the SfsA family.

The sequence is that of Sugar fermentation stimulation protein homolog from Aliivibrio salmonicida (strain LFI1238) (Vibrio salmonicida (strain LFI1238)).